A 289-amino-acid polypeptide reads, in one-letter code: Bis(5'-nucleosyl)-tetraphosphatase, symmetrical (289 aa).

The protein belongs to the Ap4A hydrolase family.

The catalysed reaction is P(1),P(4)-bis(5'-adenosyl) tetraphosphate + H2O = 2 ADP + 2 H(+). Its function is as follows. Hydrolyzes diadenosine 5',5'''-P1,P4-tetraphosphate to yield ADP. In Yersinia pseudotuberculosis serotype O:1b (strain IP 31758), this protein is Bis(5'-nucleosyl)-tetraphosphatase, symmetrical.